The chain runs to 116 residues: MWDPLLNEFPESVHGFRCMLAIKYLQSVEETYEPNTLGHDLIRDLISVVRARDYVEATRRYNHFHARLEGSPKAELRQPIQQPCCCPHCPRHKQATIMDVQAHVPKAQNIQNVSKP.

It belongs to the geminiviridae protein AV2/V2 family. As to quaternary structure, interacts with host SGS3.

It localises to the host cytoplasm. Its subcellular location is the host perinuclear region. Through its interaction with host SGS3, acts as a suppressor of RNA-mediated gene silencing, also known as post-transcriptional gene silencing (PTGS), a mechanism of plant viral defense that limits the accumulation of viral RNAs. The polypeptide is Protein V2 (Tomato yellow leaf curl virus (strain Israel) (TYLCV)).